We begin with the raw amino-acid sequence, 170 residues long: MQVRLFSPTLVKLCFASDIRSLSPKYLKTRPCCSATSSFNLDAMISLSKSPASKLLYSSIVLSLRLFKSFSSAFLLSVKMSLASLFRFSRYCFASLLLLSAGFSPSNSSSDSNASSSSETSSCSSSFEDGSVISSSTVGFDGLTSPLDLFLFFCWVTSDIFSRFSIILKC.

This is an uncharacterized protein from Saccharomyces cerevisiae (strain ATCC 204508 / S288c) (Baker's yeast).